A 778-amino-acid polypeptide reads, in one-letter code: ATP synthase subunit beta (778 aa).

The unknown stretch occupies residues 1–289 (MKENNKTIEA…IDIYEENEDL (289 aa)). The segment at 290-778 (MKLNTLKSDK…KPLNSENKSN (489 aa)) is ATP synthase subunit beta. 447–454 (GGAGVGKT) lines the ATP pocket.

It belongs to the ATPase alpha/beta chains family. In terms of assembly, F-type ATPases have 2 components, CF(1) - the catalytic core - and CF(0) - the membrane proton channel. CF(1) has five subunits: alpha(3), beta(3), gamma(1), delta(1), epsilon(1). CF(0) has three main subunits: a(1), b(2) and c(9-12). The alpha and beta chains form an alternating ring which encloses part of the gamma chain. CF(1) is attached to CF(0) by a central stalk formed by the gamma and epsilon chains, while a peripheral stalk is formed by the delta and b chains.

Its subcellular location is the cell membrane. It carries out the reaction ATP + H2O + 4 H(+)(in) = ADP + phosphate + 5 H(+)(out). Produces ATP from ADP in the presence of a proton gradient across the membrane. The catalytic sites are hosted primarily by the beta subunits. This chain is ATP synthase subunit beta (atpD), found in Malacoplasma penetrans (strain HF-2) (Mycoplasma penetrans).